Reading from the N-terminus, the 265-residue chain is Hydroxyethylthiazole kinase (265 aa).

Methionine 41 lines the substrate pocket. The ATP site is built by arginine 117 and serine 163. Glycine 190 contacts substrate.

The protein belongs to the Thz kinase family. Mg(2+) serves as cofactor.

It catalyses the reaction 5-(2-hydroxyethyl)-4-methylthiazole + ATP = 4-methyl-5-(2-phosphooxyethyl)-thiazole + ADP + H(+). The protein operates within cofactor biosynthesis; thiamine diphosphate biosynthesis; 4-methyl-5-(2-phosphoethyl)-thiazole from 5-(2-hydroxyethyl)-4-methylthiazole: step 1/1. Functionally, catalyzes the phosphorylation of the hydroxyl group of 4-methyl-5-beta-hydroxyethylthiazole (THZ). This chain is Hydroxyethylthiazole kinase, found in Pediococcus pentosaceus (strain ATCC 25745 / CCUG 21536 / LMG 10740 / 183-1w).